Consider the following 314-residue polypeptide: Mitochondrial RNA-splicing protein MRS3 (314 aa).

Solcar repeat units lie at residues 31-118 (APLY…CKKN), 128-210 (HHPF…STKF), and 217-310 (YNPL…AKHF). 6 helical membrane-spanning segments follow: residues 33 to 52 (LYHQ…SVMF), 93 to 112 (GVQS…FGTY), 130 to 149 (PFKT…ALMN), 185 to 204 (SYPT…FVIY), 219 to 238 (PLIH…AITT), and 285 to 298 (GWKP…PATA).

Belongs to the mitochondrial carrier (TC 2.A.29) family.

Its subcellular location is the mitochondrion inner membrane. In terms of biological role, MRS3 suppresses a mitochondrial splice defect in the first intron of the COB gene. It may act as a carrier, exerting its suppressor activity via modulation of solute concentrations in the mitochondrion (possibly of cations). In Saccharomyces cerevisiae (strain ATCC 204508 / S288c) (Baker's yeast), this protein is Mitochondrial RNA-splicing protein MRS3 (MRS3).